The chain runs to 354 residues: Nicotinate-nucleotide--dimethylbenzimidazole phosphoribosyltransferase (354 aa).

Catalysis depends on Glu313, which acts as the Proton acceptor.

Belongs to the CobT family.

It catalyses the reaction 5,6-dimethylbenzimidazole + nicotinate beta-D-ribonucleotide = alpha-ribazole 5'-phosphate + nicotinate + H(+). Its pathway is nucleoside biosynthesis; alpha-ribazole biosynthesis; alpha-ribazole from 5,6-dimethylbenzimidazole: step 1/2. Its function is as follows. Catalyzes the synthesis of alpha-ribazole-5'-phosphate from nicotinate mononucleotide (NAMN) and 5,6-dimethylbenzimidazole (DMB). The protein is Nicotinate-nucleotide--dimethylbenzimidazole phosphoribosyltransferase of Ralstonia nicotianae (strain ATCC BAA-1114 / GMI1000) (Ralstonia solanacearum).